A 460-amino-acid polypeptide reads, in one-letter code: Chromosomal replication initiator protein DnaA (460 aa).

A domain I, interacts with DnaA modulators region spans residues 1 to 78 (MENFWQACSA…VPVEVQFVLD (78 aa)). A domain II region spans residues 78–123 (DPRLVAARRPAAQASVVSDRADDVPSNVLEPIPSNATDHTPRRDQS). Positions 124 to 340 (RINTALTFDS…GALRKILAYS (217 aa)) are domain III, AAA+ region. Residues G168, G170, K171, and T172 each coordinate ATP. A domain IV, binds dsDNA region spans residues 341–460 (RFHGKDITIE…LHVLEQTLKG (120 aa)).

This sequence belongs to the DnaA family. As to quaternary structure, oligomerizes as a right-handed, spiral filament on DNA at oriC.

The protein localises to the cytoplasm. Functionally, plays an essential role in the initiation and regulation of chromosomal replication. ATP-DnaA binds to the origin of replication (oriC) to initiate formation of the DNA replication initiation complex once per cell cycle. Binds the DnaA box (a 9 base pair repeat at the origin) and separates the double-stranded (ds)DNA. Forms a right-handed helical filament on oriC DNA; dsDNA binds to the exterior of the filament while single-stranded (ss)DNA is stabiized in the filament's interior. The ATP-DnaA-oriC complex binds and stabilizes one strand of the AT-rich DNA unwinding element (DUE), permitting loading of DNA polymerase. After initiation quickly degrades to an ADP-DnaA complex that is not apt for DNA replication. Binds acidic phospholipids. The sequence is that of Chromosomal replication initiator protein DnaA from Herminiimonas arsenicoxydans.